Reading from the N-terminus, the 2400-residue chain is Retinitis pigmentosa 1-like 1 protein (2400 aa).

Doublecortin domains are found at residues Lys34–Arg118 and Arg152–Lys231. 6 disordered regions span residues Cys104–Arg152, Met230–Lys310, Gly444–Ala1064, Ala1188–Glu1251, Glu1275–Glu1501, and Arg1697–Phe2400. The span at Ser242–Gly251 shows a compositional bias: polar residues. Residues Arg277–Pro287 are compositionally biased toward pro residues. Residues Gln450 to Gly460 show a composition bias toward polar residues. Low complexity-rich tracts occupy residues Gly530–Glu543 and Asp573–Leu584. Residues Ala591–Ala601 show a composition bias toward polar residues. 2 stretches are compositionally biased toward low complexity: residues Ser625–Gly637 and Ala645–Pro654. Over residues Pro661–Tyr670 the composition is skewed to basic residues. 2 stretches are compositionally biased toward polar residues: residues Thr711–Val740 and Cys825–Gln835. 3 stretches are compositionally biased toward low complexity: residues Gln864 to Thr880, Pro903 to Gly921, and Ser941 to Pro953. 2 stretches are compositionally biased toward polar residues: residues Leu1223 to Arg1238 and Ala1285 to Glu1299. Residues Leu1292–Lys1307 form a 1-1; approximate repeat. Residues Leu1292–Lys1342 form a 3 X 16 AA approximate tandem repeats of T-E-E-G-L-Q-E-E-G-V-Q-L-E-E-T-K region. The 1-2; approximate repeat unit spans residues Thr1310–Lys1326. Residues Thr1327–Lys1342 form a 1-3 repeat. Residues Gly1346–Gly1363 are compositionally biased toward acidic residues. Low complexity predominate over residues Arg1434 to Glu1445. Composition is skewed to polar residues over residues Thr1460–Gln1472 and Glu1489–Glu1501. Residues Ala1726 to Gln1736 are compositionally biased toward gly residues. 2 stretches are compositionally biased toward basic and acidic residues: residues Leu1752–Glu1762 and Ala1769–Asn1778. 3 consecutive repeat copies span residues Glu1836 to Val1851, Glu1852 to Ala1867, and Glu1875 to Val1890. Acidic residues-rich tracts occupy residues Glu1836–Pro1909 and Glu1920–Gln1948. Residues Glu1836 to Glu2244 are 25 X 16 AA approximate tandem repeats of [ED]-[AT]-[PQ]-[ED]-[AVT]-E-[GKE]-[ED]-[AMT]-Q-[EPK]-[EAT]-[TSELP]-[EG]-[EGSQDI]-[AVIE]. Residues Glu1891–Ala1906 form a 2-4; approximate repeat. One copy of the 2-5 repeat lies at Glu1907–Ser1921. One copy of the 2-6; approximate repeat lies at Glu1923 to Ala1938. Residues Glu1934–Gln2017 are a coiled coil. The stretch at Glu1939 to Thr1954 is one 2-7 repeat. The segment covering Glu1949–Ser1958 has biased composition (low complexity). The 2-8; approximate repeat unit spans residues Gln1955–Ala1970. 4 stretches are compositionally biased toward acidic residues: residues Glu1959 to Gly2022, Ala2048 to Glu2075, Glu2083 to Gly2108, and Glu2117 to Thr2245. One copy of the 2-9; approximate repeat lies at Gln1971–Val1984. 2 tandem repeats follow at residues Glu1985–Val2000 and Glu2001–Ala2016. A 2-12; approximate repeat occupies Gln2017 to Gly2031. A 2-13d repeat occupies Glu2033–Ala2048. The stretch at Gly2054–Glu2081 forms a coiled coil. A 2-14 repeat occupies Glu2056 to Val2071. Residues Gln2072–Val2085 form a 2-15; approximate repeat. 10 tandem repeats follow at residues Asp2086–Val2101, Glu2102–Ile2116, Glu2117–Ile2132, Glu2133–Val2148, Glu2149–Ile2164, Glu2165–Val2180, Glu2181–Ile2196, Glu2197–Val2212, Glu2213–Val2228, and Glu2229–Glu2244. Residues Pro2292–Asn2308 show a composition bias toward polar residues. A compositionally biased stretch (basic and acidic residues) spans Lys2312–Asp2327.

As to quaternary structure, interacts with RP1; has a synergistic effect with RP1 in photoreceptor differentiation. In terms of tissue distribution, retinal-specific; expressed in photoreceptor.

The protein localises to the cytoplasm. It localises to the cytoskeleton. The protein resides in the cilium axoneme. It is found in the cell projection. Its subcellular location is the cilium. The protein localises to the photoreceptor outer segment. Required for the differentiation of photoreceptor cells. Plays a role in the organization of outer segment of rod and cone photoreceptors. This chain is Retinitis pigmentosa 1-like 1 protein (RP1L1), found in Homo sapiens (Human).